The primary structure comprises 370 residues: 4-hydroxy-3-methylbut-2-en-1-yl diphosphate synthase (flavodoxin) (370 aa).

The [4Fe-4S] cluster site is built by Cys270, Cys273, Cys305, and Glu312.

The protein belongs to the IspG family. Requires [4Fe-4S] cluster as cofactor.

The catalysed reaction is (2E)-4-hydroxy-3-methylbut-2-enyl diphosphate + oxidized [flavodoxin] + H2O + 2 H(+) = 2-C-methyl-D-erythritol 2,4-cyclic diphosphate + reduced [flavodoxin]. Its pathway is isoprenoid biosynthesis; isopentenyl diphosphate biosynthesis via DXP pathway; isopentenyl diphosphate from 1-deoxy-D-xylulose 5-phosphate: step 5/6. In terms of biological role, converts 2C-methyl-D-erythritol 2,4-cyclodiphosphate (ME-2,4cPP) into 1-hydroxy-2-methyl-2-(E)-butenyl 4-diphosphate. The sequence is that of 4-hydroxy-3-methylbut-2-en-1-yl diphosphate synthase (flavodoxin) from Azotobacter vinelandii (strain DJ / ATCC BAA-1303).